The following is a 55-amino-acid chain: uncharacterized protein (55 aa).

A helical membrane pass occupies residues 7–24 (VALVGAVLATLTACTGHI).

It localises to the membrane. This is an uncharacterized protein from Escherichia coli O157:H7.